Here is a 183-residue protein sequence, read N- to C-terminus: Caspase recruitment domain-containing protein 19 (183 aa).

A disulfide bond links C7 and C77. The region spanning 8-99 is the CARD domain; sequence DRLVQDTPFL…PLHSCLPSRH (92 aa). A helical transmembrane segment spans residues 122 to 142; it reads GPVAFLTCLGLAAGLALLIYC.

Associates with BCL10 by CARD-CARD interaction.

It localises to the endoplasmic reticulum membrane. It is found in the mitochondrion membrane. Functionally, plays a role in inhibiting the effects of BCL10-induced activation of NF-kappa-B. May inhibit the phosphorylation of BCL10 in a CARD-dependent manner. This is Caspase recruitment domain-containing protein 19 (CARD19) from Bos taurus (Bovine).